A 302-amino-acid polypeptide reads, in one-letter code: Sulfate adenylyltransferase subunit 2 (302 aa).

The protein belongs to the PAPS reductase family. CysD subfamily. As to quaternary structure, heterodimer composed of CysD, the smaller subunit, and CysN.

The catalysed reaction is sulfate + ATP + H(+) = adenosine 5'-phosphosulfate + diphosphate. It functions in the pathway sulfur metabolism; hydrogen sulfide biosynthesis; sulfite from sulfate: step 1/3. Functionally, with CysN forms the ATP sulfurylase (ATPS) that catalyzes the adenylation of sulfate producing adenosine 5'-phosphosulfate (APS) and diphosphate, the first enzymatic step in sulfur assimilation pathway. APS synthesis involves the formation of a high-energy phosphoric-sulfuric acid anhydride bond driven by GTP hydrolysis by CysN coupled to ATP hydrolysis by CysD. The polypeptide is Sulfate adenylyltransferase subunit 2 (Xanthomonas euvesicatoria pv. vesicatoria (strain 85-10) (Xanthomonas campestris pv. vesicatoria)).